The primary structure comprises 222 residues: Pyrrolidone-carboxylate peptidase (222 aa).

Active-site residues include Glu80, Cys146, and His170.

The protein belongs to the peptidase C15 family. As to quaternary structure, homotetramer.

Its subcellular location is the cytoplasm. It carries out the reaction Release of an N-terminal pyroglutamyl group from a polypeptide, the second amino acid generally not being Pro.. Removes 5-oxoproline from various penultimate amino acid residues except L-proline. This is Pyrrolidone-carboxylate peptidase from Mycobacterium marinum (strain ATCC BAA-535 / M).